The chain runs to 309 residues: MTNFIYNKHIISINDLSKKEMNSIIDFSFSFKLKSFNTFLKNKIIAICFLEASTRTRLSFESAIYRSGGTCIGFSDSSNTSLEKKGESFIDTISIISKYVDAIIVRHPKEGAARLASEYSNNIPVINAGDGANQHPTQTILDLFSIKETQGKLDNLNIAIIGDLKYSRTVHSLSQAISKFKKNKIYFIAHSALMLPSYIINILEEKKVEYSFHDSIEEVIKKIDILYITRIQKERLDSSEYANINAKFILKKSDLFYAKKNLKILHPLPRSNELSFEVDKTSYAYYFQQAENGLFVRQAILSSILNKKL.

Carbamoyl phosphate-binding residues include arginine 55 and threonine 56. Position 85 (lysine 85) interacts with L-aspartate. Carbamoyl phosphate-binding residues include arginine 106, histidine 135, and glutamine 138. L-aspartate-binding residues include arginine 168 and arginine 230. Carbamoyl phosphate contacts are provided by leucine 268 and proline 269.

This sequence belongs to the aspartate/ornithine carbamoyltransferase superfamily. ATCase family. As to quaternary structure, heterododecamer (2C3:3R2) of six catalytic PyrB chains organized as two trimers (C3), and six regulatory PyrI chains organized as three dimers (R2).

The enzyme catalyses carbamoyl phosphate + L-aspartate = N-carbamoyl-L-aspartate + phosphate + H(+). It functions in the pathway pyrimidine metabolism; UMP biosynthesis via de novo pathway; (S)-dihydroorotate from bicarbonate: step 2/3. Its function is as follows. Catalyzes the condensation of carbamoyl phosphate and aspartate to form carbamoyl aspartate and inorganic phosphate, the committed step in the de novo pyrimidine nucleotide biosynthesis pathway. The polypeptide is Aspartate carbamoyltransferase catalytic subunit (Wigglesworthia glossinidia brevipalpis).